The chain runs to 104 residues: MEQIAFRMQLDPAQAAEYERRHDEIWPELVAALKDAGISDYSIFLDLSDGSLFAVLRRRPGHAMDALPEQAVMRRWWQAMADIMRTNPDASPTASPLRRVFHLP.

Residue Tyr-18 participates in substrate binding. The active-site Proton donor is His-22. Substrate-binding positions include Tyr-41 and 76-77 (WW).

Belongs to the rhamnose mutarotase family. Homodimer.

Its subcellular location is the cytoplasm. It carries out the reaction alpha-L-rhamnose = beta-L-rhamnose. It participates in carbohydrate metabolism; L-rhamnose metabolism. Its function is as follows. Involved in the anomeric conversion of L-rhamnose. This chain is L-rhamnose mutarotase, found in Acidiphilium cryptum (strain JF-5).